The chain runs to 30 residues: Urease subunit alpha (30 aa).

This sequence belongs to the metallo-dependent hydrolases superfamily. Urease alpha subunit family. As to quaternary structure, heterotrimer of UreA (gamma), UreB (beta) and UreC (alpha) subunits. Three heterotrimers associate to form the active enzyme. It depends on Ni cation as a cofactor.

The protein resides in the cytoplasm. It carries out the reaction urea + 2 H2O + H(+) = hydrogencarbonate + 2 NH4(+). Its pathway is nitrogen metabolism; urea degradation; CO(2) and NH(3) from urea (urease route): step 1/1. The polypeptide is Urease subunit alpha (ureC) (Escherichia coli).